The chain runs to 161 residues: UPF0178 protein BOV_1904 (161 aa).

This sequence belongs to the UPF0178 family.

The protein is UPF0178 protein BOV_1904 of Brucella ovis (strain ATCC 25840 / 63/290 / NCTC 10512).